The chain runs to 205 residues: Meiotic nuclear division protein 1 homolog (205 aa).

N-acetylserine is present on serine 2. Residues 83 to 173 are a coiled coil; sequence KRKLEALNSQ…EAANRWTDNI (91 aa).

Belongs to the MND1 family. In terms of assembly, heterodimer with PSMC3IP/HOP2. MND1-PSMC3IP interacts with DMC1 and RAD51 and binds to ssDNA and dsDNA showing no preference for either form of DNA.

The protein localises to the nucleus. Functionally, required for proper homologous chromosome pairing and efficient cross-over and intragenic recombination during meiosis. Stimulates both DMC1- and RAD51-mediated homologous strand assimilation, which is required for the resolution of meiotic double-strand breaks. This is Meiotic nuclear division protein 1 homolog from Mus musculus (Mouse).